Here is a 67-residue protein sequence, read N- to C-terminus: Large ribosomal subunit protein bL35 (67 aa).

The segment at 21-50 (KVMCGPGNKRHGLINRPQKMKRTNRGPQTM) is disordered. The segment covering 28-44 (NKRHGLINRPQKMKRTN) has biased composition (basic residues).

Belongs to the bacterial ribosomal protein bL35 family.

The polypeptide is Large ribosomal subunit protein bL35 (Gluconobacter oxydans (strain 621H) (Gluconobacter suboxydans)).